Here is a 465-residue protein sequence, read N- to C-terminus: Ribosomal oxygenase 2 (465 aa).

The region spanning 139 to 271 is the JmjC domain; sequence QPQRYKDELW…NSWGDCLLDS (133 aa). The Fe cation site is built by H179, D181, and H240. Phosphoserine is present on S309.

This sequence belongs to the ROX family. MINA53 subfamily. Fe(2+) serves as cofactor. In terms of tissue distribution, predominantly expressed in testis. Expressed at high levels in spleen, thymus, and colon, but barely detectable in brain, skeletal muscle, and seminal vesicle (at protein level).

Its subcellular location is the nucleus. It is found in the nucleolus. The catalysed reaction is L-histidyl-[ribosomal protein uL15] + 2-oxoglutarate + O2 = (3S)-3-hydroxy-L-histidyl-[ribosomal protein uL15] + succinate + CO2. It carries out the reaction L-histidyl-[protein] + 2-oxoglutarate + O2 = (3S)-3-hydroxy-L-histidyl-[protein] + succinate + CO2. Oxygenase that can act as both a histone lysine demethylase and a ribosomal histidine hydroxylase. Is involved in the demethylation of trimethylated 'Lys-9' on histone H3 (H3K9me3), leading to an increase in ribosomal RNA expression. Also catalyzes the hydroxylation of 60S ribosomal protein L27a on 'His-39'. May play an important role in cell growth and survival. May be involved in ribosome biogenesis, most likely during the assembly process of pre-ribosomal particles. This Mus musculus (Mouse) protein is Ribosomal oxygenase 2.